Here is a 384-residue protein sequence, read N- to C-terminus: N-acetylneuraminate epimerase (384 aa).

The signal sequence occupies residues 1–29; that stretch reads MGMQMKNFKKMMTLMALCLSVAITTSGYA. Kelch repeat units follow at residues 51 to 95, 97 to 149, 151 to 184, 185 to 230, 233 to 282, 304 to 353, and 355 to 384; these read VIYV…VFLN, ELYV…VKLN, TMVL…KVIY, NYFN…VMEN, LMLI…LAGA, QNYT…SYGD, and VFLI…LLIK. Glu-239 serves as the catalytic Proton acceptor.

This sequence belongs to the NanM family. As to quaternary structure, homodimer.

The protein resides in the periplasm. It catalyses the reaction N-acetyl-alpha-neuraminate = N-acetyl-beta-neuraminate. Functionally, converts alpha-N-acetylneuranimic acid (Neu5Ac) to the beta-anomer, accelerating the equilibrium between the alpha- and beta-anomers. Probably facilitates sialidase-negative bacteria to compete successfully for limited amounts of extracellular Neu5Ac, which is likely taken up in the beta-anomer. In addition, the rapid removal of sialic acid from solution might be advantageous to the bacterium to damp down host responses. In Salmonella enteritidis PT4 (strain P125109), this protein is N-acetylneuraminate epimerase.